The primary structure comprises 121 residues: Small ribosomal subunit protein uS13 (121 aa).

The interval 95-121 (LPMRGQRTRTNARTRKGPRKAAASLKK) is disordered.

Belongs to the universal ribosomal protein uS13 family. As to quaternary structure, part of the 30S ribosomal subunit. Forms a loose heterodimer with protein S19. Forms two bridges to the 50S subunit in the 70S ribosome.

Located at the top of the head of the 30S subunit, it contacts several helices of the 16S rRNA. In the 70S ribosome it contacts the 23S rRNA (bridge B1a) and protein L5 of the 50S subunit (bridge B1b), connecting the 2 subunits; these bridges are implicated in subunit movement. Contacts the tRNAs in the A and P-sites. This Polaromonas naphthalenivorans (strain CJ2) protein is Small ribosomal subunit protein uS13.